Reading from the N-terminus, the 482-residue chain is Islet cell autoantigen 1-like protein (482 aa).

One can recognise an AH domain in the interval 44–247; that stretch reads ASDAELDAKL…TARMMSQIHE (204 aa). 2 disordered regions span residues 365–393 and 427–449; these read TQEC…PLAH and SHTD…PNNG. 2 stretches are compositionally biased toward polar residues: residues 366-385 and 428-449; these read QECQ…QEPS and HTDN…PNNG.

This chain is Islet cell autoantigen 1-like protein (ICA1L), found in Homo sapiens (Human).